The following is a 504-amino-acid chain: Maturase K (504 aa).

It belongs to the intron maturase 2 family. MatK subfamily.

It localises to the plastid. Its subcellular location is the chloroplast. In terms of biological role, usually encoded in the trnK tRNA gene intron. Probably assists in splicing its own and other chloroplast group II introns. The sequence is that of Maturase K from Eichhornia crassipes (Water hyacinth).